The sequence spans 342 residues: Protein FDO1 (342 aa).

3 disordered regions span residues 1–36, 57–76, and 299–322; these read MEENKLSGNKPIQLATWSNQMGSPENNGNNANNGSD, MSPMEEEHSQPSSSQETLSV, and GRTITHNRPNTKDESIQDSHGNRT. Over residues 15–25 the composition is skewed to polar residues; the sequence is ATWSNQMGSPE. Positions 308–319 are enriched in basic and acidic residues; the sequence is NTKDESIQDSHG.

In terms of assembly, interacts with FKH1.

Functionally, in concert with FKH1, plays a role in directionality of mating type switching by controlling which donor mating-type locus is inserted into MAT locus during mating type switching. In Saccharomyces cerevisiae (strain ATCC 204508 / S288c) (Baker's yeast), this protein is Protein FDO1.